Reading from the N-terminus, the 212-residue chain is NAD(P)H-hydrate epimerase (212 aa).

The region spanning 11–212 is the YjeF N-terminal domain; that stretch reads MRHYDSYTIN…ANDMGTYAVD (202 aa). 60 to 64 serves as a coordination point for (6S)-NADPHX; it reads NNGGD. 2 residues coordinate K(+): N61 and D123. (6S)-NADPHX-binding positions include 127-133, Y138, and D156; that span reads GIGIDRA. S159 provides a ligand contact to K(+).

Belongs to the NnrE/AIBP family. Requires K(+) as cofactor.

It catalyses the reaction (6R)-NADHX = (6S)-NADHX. The catalysed reaction is (6R)-NADPHX = (6S)-NADPHX. In terms of biological role, catalyzes the epimerization of the S- and R-forms of NAD(P)HX, a damaged form of NAD(P)H that is a result of enzymatic or heat-dependent hydration. This is a prerequisite for the S-specific NAD(P)H-hydrate dehydratase to allow the repair of both epimers of NAD(P)HX. The sequence is that of NAD(P)H-hydrate epimerase from Limosilactobacillus reuteri (strain ATCC 55730 / SD2112) (Lactobacillus reuteri).